The primary structure comprises 579 residues: Adenine deaminase (579 aa).

It belongs to the metallo-dependent hydrolases superfamily. Adenine deaminase family. Mn(2+) is required as a cofactor.

It catalyses the reaction adenine + H2O + H(+) = hypoxanthine + NH4(+). The protein is Adenine deaminase of Listeria monocytogenes serotype 4b (strain F2365).